The chain runs to 129 residues: Large ribosomal subunit protein bL20 (129 aa).

Belongs to the bacterial ribosomal protein bL20 family.

Its function is as follows. Binds directly to 23S ribosomal RNA and is necessary for the in vitro assembly process of the 50S ribosomal subunit. It is not involved in the protein synthesizing functions of that subunit. The protein is Large ribosomal subunit protein bL20 of Mycobacterium marinum (strain ATCC BAA-535 / M).